Reading from the N-terminus, the 638-residue chain is Exocyst complex component EXO70A1 (638 aa).

The interval 163-190 (FDGLPNSLRPSSDGDGGGKPHGGHHNDD) is disordered.

This sequence belongs to the EXO70 family. The exocyst complex is composed of SEC3, SEC5, SEC6, SEC8, SEC10, EXO70A1 and EXO84B. Interacts with SEC3A and EXO84B. Co-localizes with FPP3/VETH1, FPP2/VETH2 and COG2 in vesicle-like small motile compartments. May interact with COG2.

It localises to the cytoplasm. The protein localises to the cytosol. It is found in the cytoskeleton. The protein resides in the phragmoplast. Its subcellular location is the cell membrane. It localises to the secreted. The protein localises to the cell wall. Functionally, component of the exocyst complex involved in the docking of exocytic vesicles with fusion sites on the plasma membrane during regulated or polarized secretion. Involved in polarized cell growth and organ morphogenesis. Involved in polarized cell growth and organ morphogenesis. During cytokinesis, involved in cell plate initiation, cell plate maturation and formation of new primary cell wall. Participates in polarized pectin delivery required for the polarized development of the mucilage-producing volcano cells of the seed coat. Involved in the recycling and localization of auxin efflux carriers PIN1 and PIN2, and thus in polar auxin transport regulation. Functions in vesicle trafficking in tracheary elements to regulate patterned secondary cell wall (SCW) thickening. The protein is Exocyst complex component EXO70A1 of Arabidopsis thaliana (Mouse-ear cress).